A 446-amino-acid polypeptide reads, in one-letter code: Glycine--tRNA ligase (446 aa).

Substrate contacts are provided by arginine 100 and glutamate 158. ATP-binding positions include 190–192 (RNE), 200–205 (FRTREF), 275–276 (EL), and 319–322 (GIER). Position 205–209 (205–209 (FEQFE)) interacts with substrate. 315-319 (EPAVG) serves as a coordination point for substrate.

Belongs to the class-II aminoacyl-tRNA synthetase family. In terms of assembly, homodimer.

The protein resides in the cytoplasm. It catalyses the reaction tRNA(Gly) + glycine + ATP = glycyl-tRNA(Gly) + AMP + diphosphate. Functionally, catalyzes the attachment of glycine to tRNA(Gly). This is Glycine--tRNA ligase from Mycoplasma genitalium (strain ATCC 33530 / DSM 19775 / NCTC 10195 / G37) (Mycoplasmoides genitalium).